The following is a 224-amino-acid chain: Flagellar L-ring protein (224 aa).

Positions 1–15 (MIKYIALASVVLLVG) are cleaved as a signal peptide. The N-palmitoyl cysteine moiety is linked to residue Cys-16. Cys-16 carries S-diacylglycerol cysteine lipidation.

It belongs to the FlgH family. In terms of assembly, the basal body constitutes a major portion of the flagellar organelle and consists of four rings (L,P,S, and M) mounted on a central rod.

Its subcellular location is the cell outer membrane. The protein localises to the bacterial flagellum basal body. Its function is as follows. Assembles around the rod to form the L-ring and probably protects the motor/basal body from shearing forces during rotation. The sequence is that of Flagellar L-ring protein from Shewanella frigidimarina (strain NCIMB 400).